The primary structure comprises 94 residues: Integration host factor subunit beta (94 aa).

It belongs to the bacterial histone-like protein family. Heterodimer of an alpha and a beta chain.

Its function is as follows. This protein is one of the two subunits of integration host factor, a specific DNA-binding protein that functions in genetic recombination as well as in transcriptional and translational control. This chain is Integration host factor subunit beta, found in Histophilus somni (strain 129Pt) (Haemophilus somnus).